The chain runs to 356 residues: MTRLTLALDVMGGDFGPSVTVPAALQALNSNSQLTLLLVGNSDAITPLLAKADFEQRSRLQIIPAQSVIASDARPSQAIRASRGSSMRVALELVKEGRAQACVSAGNTGALMGLAKLLLKPLEGIERPALVTVLPHQQKGKTVVLDLGANVDCDSTMLVQFAIMGSVLAEEVVEIPNPRVALLNIGEEEVKGLDSIRDASAVLKTIPSINYIGYLEANELLTGKTDVLVCDGFTGNVTLKTMEGVVRMFLSLLKSQGEGKKRSWWLLLLKRWLQKSLTRRFSHLNPDQYNGACLLGLRGTVIKSHGAANQRAFAVAIEQAVQAVQRQVPQRIAARLESVYPAGFELLDGGKSGTLR.

It belongs to the PlsX family. In terms of assembly, homodimer. Probably interacts with PlsY.

Its subcellular location is the cytoplasm. The enzyme catalyses a fatty acyl-[ACP] + phosphate = an acyl phosphate + holo-[ACP]. It participates in lipid metabolism; phospholipid metabolism. In terms of biological role, catalyzes the reversible formation of acyl-phosphate (acyl-PO(4)) from acyl-[acyl-carrier-protein] (acyl-ACP). This enzyme utilizes acyl-ACP as fatty acyl donor, but not acyl-CoA. In Escherichia coli (strain K12 / DH10B), this protein is Phosphate acyltransferase.